Reading from the N-terminus, the 239-residue chain is Ribonuclease HII (239 aa).

The region spanning 18 to 231 (KIIVGLDEAG…SKNLLKEIEE (214 aa)) is the RNase H type-2 domain. The a divalent metal cation site is built by aspartate 24, glutamate 25, and aspartate 125.

The protein belongs to the RNase HII family. Mn(2+) is required as a cofactor. It depends on Mg(2+) as a cofactor.

It localises to the cytoplasm. The enzyme catalyses Endonucleolytic cleavage to 5'-phosphomonoester.. Endonuclease that specifically degrades the RNA of RNA-DNA hybrids. The chain is Ribonuclease HII from Methanococcus maripaludis (strain C7 / ATCC BAA-1331).